The following is a 747-amino-acid chain: Ubiquitin carboxyl-terminal hydrolase 13 (747 aa).

In terms of domain architecture, USP spans 140–668 (FGYENFGNTC…TAYVLFYKAM (529 aa)). The active-site Nucleophile is cysteine 149. Disordered stretches follow at residues 172–305 (PKKS…RPPD) and 318–367 (YENP…RKKS). Basic and acidic residues predominate over residues 174-183 (KSRESDQPRK). At serine 198 the chain carries Phosphoserine. The segment covering 225 to 235 (PVNSVNSNTAG) has biased composition (polar residues). Positions 251 to 260 (HVQDNNKKEG) are enriched in basic and acidic residues. Positions 319–343 (ENPSRGSSNSNNLDLKGESNSSLST) are enriched in polar residues. Residue histidine 619 is the Proton acceptor of the active site.

Belongs to the peptidase C19 family.

It carries out the reaction Thiol-dependent hydrolysis of ester, thioester, amide, peptide and isopeptide bonds formed by the C-terminal Gly of ubiquitin (a 76-residue protein attached to proteins as an intracellular targeting signal).. This chain is Ubiquitin carboxyl-terminal hydrolase 13 (UBP13), found in Saccharomyces cerevisiae (strain ATCC 204508 / S288c) (Baker's yeast).